The following is a 103-amino-acid chain: MKRILTLTVAALALGTPALAYDGTNCKAPGNCWEPKPDYPAKVEGSKYDPQHDPAELSKQGESLAVMDARNEWRVWNMKKTGKFEYDVKKIDGYDETKAPPAE.

A signal peptide spans 1-20; the sequence is MKRILTLTVAALALGTPALA. Cysteine 26 and cysteine 32 form a disulfide bridge.

This sequence belongs to the methanol dehydrogenase subunit 2 family. In terms of assembly, heterotetramer composed of 2 alpha and 2 beta subunits.

The protein resides in the periplasm. It catalyses the reaction 2 Fe(III)-[cytochrome cL] + a primary alcohol = 2 Fe(II)-[cytochrome cL] + an aldehyde + 2 H(+). Its function is as follows. Catalyzes the oxidation of primary alcohols including methanol. The chain is Methanol dehydrogenase [cytochrome c] subunit 2 (moxI) from Paracoccus denitrificans.